The following is a 230-amino-acid chain: Uracil-DNA glycosylase (230 aa).

The active-site Proton acceptor is Asp65.

The protein belongs to the uracil-DNA glycosylase (UDG) superfamily. UNG family.

It localises to the cytoplasm. The catalysed reaction is Hydrolyzes single-stranded DNA or mismatched double-stranded DNA and polynucleotides, releasing free uracil.. In terms of biological role, excises uracil residues from the DNA which can arise as a result of misincorporation of dUMP residues by DNA polymerase or due to deamination of cytosine. The sequence is that of Uracil-DNA glycosylase from Lactiplantibacillus plantarum (strain ATCC BAA-793 / NCIMB 8826 / WCFS1) (Lactobacillus plantarum).